The sequence spans 281 residues: 4-diphosphocytidyl-2-C-methyl-D-erythritol kinase (281 aa).

Residue Lys11 is part of the active site. 95–105 (PVAAGLGGGSS) contributes to the ATP binding site. The active site involves Asp137.

It belongs to the GHMP kinase family. IspE subfamily.

The catalysed reaction is 4-CDP-2-C-methyl-D-erythritol + ATP = 4-CDP-2-C-methyl-D-erythritol 2-phosphate + ADP + H(+). It participates in isoprenoid biosynthesis; isopentenyl diphosphate biosynthesis via DXP pathway; isopentenyl diphosphate from 1-deoxy-D-xylulose 5-phosphate: step 3/6. Functionally, catalyzes the phosphorylation of the position 2 hydroxy group of 4-diphosphocytidyl-2C-methyl-D-erythritol. In Geobacter metallireducens (strain ATCC 53774 / DSM 7210 / GS-15), this protein is 4-diphosphocytidyl-2-C-methyl-D-erythritol kinase.